The sequence spans 309 residues: Olfactory receptor 7A10 (309 aa).

Residues 1–25 are Extracellular-facing; the sequence is MKSWNNTIILEFLLLGISEEPELQA. The N-linked (GlcNAc...) asparagine glycan is linked to N5. The chain crosses the membrane as a helical span at residues 26–46; the sequence is FLFGLFLSMYLVTVLGNLLII. The Cytoplasmic segment spans residues 47 to 54; it reads LATISDSH. A helical membrane pass occupies residues 55-75; it reads LHTPMYFFLSNLSFVDICFVS. Residues 76–99 lie on the Extracellular side of the membrane; that stretch reads TTVPKMLVNIQTHNKVITYAGCIT. C97 and C189 are disulfide-bonded. A helical transmembrane segment spans residues 100 to 120; that stretch reads QMCFFLLFVGLDNFLLTVMAY. At 121 to 139 the chain is on the cytoplasmic side; that stretch reads DRFVAICHPLHYMVIMNPQ. Residues 140–160 form a helical membrane-spanning segment; it reads LCGLLVLASWIMSVLNSMLQS. At 161–197 the chain is on the extracellular side; sequence LMVLPLPFCTHMEIPHFFCEINQVVHLACSDTFLNDI. Residues 198–217 traverse the membrane as a helical segment; the sequence is VMYFAVALLGGGPLTGILYS. Topologically, residues 218-237 are cytoplasmic; sequence YSKIVSSIRAISSAQGKYKA. A helical transmembrane segment spans residues 238–258; that stretch reads FSTCASHLSVVSLFYGTCLGV. At 259 to 271 the chain is on the extracellular side; it reads YLSSAATHNSHTG. A helical membrane pass occupies residues 272–292; the sequence is AAASVMYTVVTPMLNPFIYSL. Over 293-309 the chain is Cytoplasmic; it reads RNKHIKGAMKTFFRGKQ.

The protein belongs to the G-protein coupled receptor 1 family.

It is found in the cell membrane. Its function is as follows. Odorant receptor. This chain is Olfactory receptor 7A10 (OR7A10), found in Homo sapiens (Human).